We begin with the raw amino-acid sequence, 527 residues long: Protein Lilipod (527 aa).

The Extracellular segment spans residues 1-22 (MDEEEEEEVTDLKLQLFHNTVR). The chain crosses the membrane as a helical span at residues 23-43 (EHIIFLLLIILLYSSSYVVVS). At 44–65 (RFRRRDRDDLYSNDEDEVLVYR) the chain is on the cytoplasmic side. The helical transmembrane segment at 66–86 (ISFWLCTFTLAVAEGAAMLLP) threads the bilayer. Over 87–117 (VSIASNEVLLLYPNSYYVKWLNSSLIQGLWN) the chain is Extracellular. Residues 118–138 (HVFLFSNLSLFIFLPFVYLFS) traverse the membrane as a helical segment. At 139–160 (ESTGFVGNKKGILPRVYETFTV) the chain is on the cytoplasmic side. The chain crosses the membrane as a helical span at residues 161-181 (FMLMAIIVLVLTAVLSAVFGI). The Extracellular portion of the chain corresponds to 182–194 (EKLQFFWFLNLGS). The helical transmembrane segment at 195 to 215 (VHLPFLYSCVSFLGVMLMLIC) threads the bilayer. The Cytoplasmic segment spans residues 216 to 341 (TPYGFVRLFG…LRTSSTFQRT (126 aa)). A helical transmembrane segment spans residues 342–362 (FVYPLAMLLLLFCTAVTILLV). Over 363–395 (VQNTLELLIGIKALPLSTRQFALGISSLSKLGP) the chain is Extracellular. The helical transmembrane segment at 396 to 416 (FGAGLEVCLIFYLGATSVVGF) threads the bilayer. At 417–433 (YSMPFMRKVCPKRRQTS) the chain is on the cytoplasmic side. The helical transmembrane segment at 434 to 454 (LPQLMLNCGFMLVLSSALPLL) threads the bilayer. Residues 455–468 (SRIIGITNFDLLGD) are Extracellular-facing. The helical transmembrane segment at 469-489 (FGAIEWLGNFQIVLLYNLVFG) threads the bilayer. Residues 490 to 527 (TTTALCLANKFTATVRRELRARLVENYVLFTNYISFIN) lie on the Cytoplasmic side of the membrane.

This sequence belongs to the LIMR family. In the ovary, detected in germline stem cells and their progeny. Also detected in the somatic follicular epithelium.

The protein localises to the cell membrane. Its function is as follows. Required during oogenesis to promote self-renewal of germline stem cells, probably by enhancing BMP signaling activity. The sequence is that of Protein Lilipod from Drosophila melanogaster (Fruit fly).